Here is a 101-residue protein sequence, read N- to C-terminus: MAKKSMIERELKRAKLVDKYAAKRAELKAIIYDVNASDEERFDAQLKLQQLPRDSSPVRQRNRCRVTGRPHGFYNKFGLGRNKLREAAMRGDVPGLKKSSW.

The protein belongs to the universal ribosomal protein uS14 family. Part of the 30S ribosomal subunit. Contacts proteins S3 and S10.

Its function is as follows. Binds 16S rRNA, required for the assembly of 30S particles and may also be responsible for determining the conformation of the 16S rRNA at the A site. The sequence is that of Small ribosomal subunit protein uS14 from Chromohalobacter salexigens (strain ATCC BAA-138 / DSM 3043 / CIP 106854 / NCIMB 13768 / 1H11).